The sequence spans 182 residues: Peptidoglycan-recognition protein SB2 (182 aa).

Positions 1–17 (MKLQLALVLCGLTLALG) are cleaved as a signal peptide. The N-acetylmuramoyl-L-alanine amidase domain maps to 40–165 (PVRLIIIHHT…CQTKATACPG (126 aa)). Position 47 (histidine 47) interacts with Zn(2+). A disulfide bridge links cysteine 54 with cysteine 60. A glycan (N-linked (GlcNAc...) asparagine) is linked at asparagine 149. 2 residues coordinate Zn(2+): histidine 155 and cysteine 163.

It belongs to the N-acetylmuramoyl-L-alanine amidase 2 family. Requires Zn(2+) as cofactor.

The protein resides in the secreted. It carries out the reaction Hydrolyzes the link between N-acetylmuramoyl residues and L-amino acid residues in certain cell-wall glycopeptides.. N-acetylmuramyl-L-alanine amidase involved in innate immunity by degrading bacterial peptidoglycans (PGN). Probably plays a scavenger role by digesting biologically active PGN into biologically inactive fragments. Has no direct bacteriolytic activity. This Drosophila simulans (Fruit fly) protein is Peptidoglycan-recognition protein SB2 (PGRP-SB2).